The following is a 430-amino-acid chain: Potassium channel subfamily K member 12 (430 aa).

Over 1-38 (MSSRSPRPPPRRSRRRLPRPSCCCCCCRRSHLNEDTGR) the chain is Cytoplasmic. The interval 11–16 (RRSRRR) is ER retention/retrieval signal. Residues 39-59 (FVLLAALIGLYLVAGATVFSA) form a helical membrane-spanning segment. The N-linked (GlcNAc...) asparagine glycan is linked to asparagine 78. Residues 114 to 134 (WDFPGAFYFVGTVVSTIGFGM) constitute an intramembrane region (pore-forming). K(+) contacts are provided by threonine 129, isoleucine 130, and glycine 131. A selectivity filter 1 region spans residues 129 to 134 (TIGFGM). The helical transmembrane segment at 145–165 (FLIAYGLFGCAGTILFFNLFL) threads the bilayer. Over 166–212 (ERIISLLAFIMRACRERQLRRSGLLPATFRRGSALSEADSLAGWKPS) the chain is Cytoplasmic. The chain crosses the membrane as a helical span at residues 213–233 (VYHVLLILGLFAVLLSCCASA). Residues 243-263 (YVDSLYFCFVTFSTIGFGDLV) constitute an intramembrane region (pore-forming). Threonine 256, isoleucine 257, glycine 258, and phenylalanine 259 together coordinate K(+). Residues 256-261 (TIGFGD) form a selectivity filter 2 region. Residues 282 to 302 (LFILLGVCCIYSLFNVISILI) traverse the membrane as a helical segment. At 303–430 (KQVLNWMLRK…NRLAETSASR (128 aa)) the chain is on the cytoplasmic side.

This sequence belongs to the two pore domain potassium channel (TC 1.A.1.8) family. In terms of assembly, homodimer. Heterodimer with KCNK13.

The protein localises to the cell membrane. It localises to the endoplasmic reticulum membrane. The enzyme catalyses K(+)(in) = K(+)(out). Its function is as follows. K(+) channel subunit that may homo- and heterodimerize to form functional channels with distinct regulatory and gating properties. Can heterodimerize with KCNK13 subunit to conduct K(+) outward rectifying currents at the plasma membrane. The homodimers are mainly retained in the endoplasmic reticulum compartment and may be targeted to the cell surface upon phosphorylation or other activation signals yet to be elucidated. This chain is Potassium channel subfamily K member 12, found in Homo sapiens (Human).